Consider the following 193-residue polypeptide: MAKKQSILSPIIRITFTFLVLCGLVYPLIVTGIAQAVMKDNADGSLIYNDKDEVVGSKLIGQNFTDPRYFHGRVSSIEYKAEASGSNNYAPSNPDLAKRVEKSIDDWKKQNRAIPVTEVPIDLVTNSGSGLDPDISPKAASVQVDRISKLTNIPKEKLDQLIKDQTEGAALGLFGEDRVNVLKLNLELQKLMK.

A helical membrane pass occupies residues 14–34 (ITFTFLVLCGLVYPLIVTGIA).

The protein belongs to the KdpC family. In terms of assembly, the system is composed of three essential subunits: KdpA, KdpB and KdpC.

It is found in the cell membrane. In terms of biological role, part of the high-affinity ATP-driven potassium transport (or Kdp) system, which catalyzes the hydrolysis of ATP coupled with the electrogenic transport of potassium into the cytoplasm. This subunit acts as a catalytic chaperone that increases the ATP-binding affinity of the ATP-hydrolyzing subunit KdpB by the formation of a transient KdpB/KdpC/ATP ternary complex. The polypeptide is Potassium-transporting ATPase KdpC subunit (Bacillus mycoides (strain KBAB4) (Bacillus weihenstephanensis)).